We begin with the raw amino-acid sequence, 606 residues long: Replication protein E1 (606 aa).

Positions 76–78 match the Nuclear localization signal motif; that stretch reads KRK. Phosphoserine; by host is present on residues S81 and S89. A DNA-binding region region spans residues 144 to 307; that stretch reads GTGDVDIDYL…TVLGHQNAEA (164 aa). The SF3 helicase domain maps to 406–556; the sequence is VNFIMFLAAL…FPMKSDNTPQ (151 aa). An ATP-binding site is contributed by 432–439; sequence GPPNSGKS. K513 is covalently cross-linked (Glycyl lysine isopeptide (Lys-Gly) (interchain with G-Cter in SUMO)). Residues 581 to 606 are disordered; the sequence is EEEEEGEHGETQRAFQCSARSANEHI. A compositionally biased stretch (polar residues) spans 593–606; sequence RAFQCSARSANEHI.

This sequence belongs to the papillomaviridae E1 protein family. In terms of assembly, can form hexamers. Interacts with E2 protein; this interaction increases E1 DNA binding specificity. Interacts with host DNA polymerase subunit POLA2. Interacts with host single stranded DNA-binding protein RPA1. Interacts with host TOP1; this interaction stimulates the enzymatic activity of TOP1. In terms of processing, phosphorylated. Post-translationally, sumoylated.

Its subcellular location is the host nucleus. It carries out the reaction Couples ATP hydrolysis with the unwinding of duplex DNA by translocating in the 3'-5' direction.. The catalysed reaction is ATP + H2O = ADP + phosphate + H(+). Functionally, ATP-dependent DNA 3'-5' helicase required for initiation of viral DNA replication. It forms a complex with the viral E2 protein. The E1-E2 complex binds to the replication origin which contains binding sites for both proteins. During the initial step, a dimer of E1 interacts with a dimer of protein E2 leading to a complex that binds the viral origin of replication with high specificity. Then, a second dimer of E1 displaces the E2 dimer in an ATP-dependent manner to form the E1 tetramer. Following this, two E1 monomers are added to each half of the site, which results in the formation of two E1 trimers on the viral ori. Subsequently, two hexamers will be created. The double hexamer acts as a bi-directional helicase machinery and unwinds the viral DNA and then recruits the host DNA polymerase to start replication. The sequence is that of Replication protein E1 from Human papillomavirus type RTRX7.